A 152-amino-acid chain; its full sequence is uncharacterized protein (152 aa).

The Cytoplasmic segment spans residues 1-5 (MWFPQ). Residues 6-26 (IIAGMAAGGAASAMTPGKVLF) form a helical membrane-spanning segment. At 27 to 38 (TNALGLGCSRSR) the chain is on the extracellular side. A helical transmembrane segment spans residues 39-59 (GLFLEMFGTAVLCFTVLMTAV). At 60–65 (EKRETN) the chain is on the cytoplasmic side. The helical transmembrane segment at 66–86 (FMAALPIGISLFMAHMALTGY) threads the bilayer. Topologically, residues 87 to 110 (TGTGVNPARSLGAAVAARYFPHYH) are extracellular. The NPA motif lies at 92–94 (NPA). A helical membrane pass occupies residues 111–131 (WIYWISPLLGAFLAWSVWQLL). The Cytoplasmic segment spans residues 132-152 (QILDYTTYVNAEKAAGQKKED).

It belongs to the MIP/aquaporin (TC 1.A.8) family.

Its subcellular location is the membrane. This is an uncharacterized protein from Saccharomyces cerevisiae (strain YJM789) (Baker's yeast).